The primary structure comprises 267 residues: Glutamate 5-kinase (267 aa).

Residue Lys-14 participates in ATP binding. Positions 54, 141, and 157 each coordinate substrate. ATP-binding positions include 177-178 and 219-225; these read SD and TGGMMSK.

This sequence belongs to the glutamate 5-kinase family.

Its subcellular location is the cytoplasm. It catalyses the reaction L-glutamate + ATP = L-glutamyl 5-phosphate + ADP. It participates in amino-acid biosynthesis; L-proline biosynthesis; L-glutamate 5-semialdehyde from L-glutamate: step 1/2. In terms of biological role, catalyzes the transfer of a phosphate group to glutamate to form L-glutamate 5-phosphate. In Streptococcus thermophilus (strain CNRZ 1066), this protein is Glutamate 5-kinase.